A 443-amino-acid chain; its full sequence is F-box only protein 39 (443 aa).

The F-box domain occupies 16–61 (WATLPDVCLRRVFWWLGDRDRSRAALVCRKWNQMMYSADLWRYRTI).

Directly interacts with SKP1 and CUL1.

Substrate-recognition component of the SCF (SKP1-CUL1-F-box protein)-type E3 ubiquitin ligase complex. The sequence is that of F-box only protein 39 (FBXO39) from Bos taurus (Bovine).